Reading from the N-terminus, the 146-residue chain is Deoxyuridine 5'-triphosphate nucleotidohydrolase (146 aa).

Residues 65-67, Asn78, and 82-84 contribute to the substrate site; these read RSG and TID.

Belongs to the dUTPase family. Requires Mg(2+) as cofactor.

The enzyme catalyses dUTP + H2O = dUMP + diphosphate + H(+). It participates in pyrimidine metabolism; dUMP biosynthesis; dUMP from dCTP (dUTP route): step 2/2. Its function is as follows. This enzyme is involved in nucleotide metabolism: it produces dUMP, the immediate precursor of thymidine nucleotides and it decreases the intracellular concentration of dUTP so that uracil cannot be incorporated into DNA. The sequence is that of Deoxyuridine 5'-triphosphate nucleotidohydrolase from Treponema pallidum subsp. pallidum (strain SS14).